Here is a 163-residue protein sequence, read N- to C-terminus: Halocyanin (163 aa).

The signal sequence occupies residues 1–24 (MKDISRRRFVLGTGATVAAATLAG). Residue Cys-25 is modified to N-acetylcysteine. Cys-25 carries the S-archaeol cysteine lipid modification. Over residues 26-38 (NGNGNGNGNGNGN) the composition is skewed to gly residues. The disordered stretch occupies residues 26-48 (NGNGNGNGNGNGNGEPDTPEGRA). Residues 48-163 (ADQFLTDNDA…QGMYGAVIVE (116 aa)) enclose the Plastocyanin-like domain. 4 residues coordinate Cu cation: His-110, Cys-148, His-151, and Met-156.

Its subcellular location is the cell membrane. Functionally, electron donor. Binds one copper ion. The sequence is that of Halocyanin (hcy) from Natronomonas pharaonis (Natronobacterium pharaonis).